We begin with the raw amino-acid sequence, 338 residues long: Glyceraldehyde-3-phosphate dehydrogenase (338 aa).

NAD(+) contacts are provided by residues Arg13–Ile14, Asp35, and Arg80. Residues Ser151 to Thr153, Thr182, Thr211 to Gly212, and Arg234 contribute to the D-glyceraldehyde 3-phosphate site. Cys152 (nucleophile) is an active-site residue. Residue Asn316 coordinates NAD(+).

Belongs to the glyceraldehyde-3-phosphate dehydrogenase family. Homotetramer.

It localises to the cytoplasm. The catalysed reaction is D-glyceraldehyde 3-phosphate + phosphate + NAD(+) = (2R)-3-phospho-glyceroyl phosphate + NADH + H(+). It functions in the pathway carbohydrate degradation; glycolysis; pyruvate from D-glyceraldehyde 3-phosphate: step 1/5. The protein is Glyceraldehyde-3-phosphate dehydrogenase (GPDA) of Colletotrichum gloeosporioides (Anthracnose fungus).